A 388-amino-acid polypeptide reads, in one-letter code: Angiopoietin-related protein 5 (388 aa).

The first 25 residues, M1 to G25, serve as a signal peptide directing secretion. An N-linked (GlcNAc...) asparagine glycan is attached at N53. Residues L98–V123 are a coiled coil. One can recognise a Fibrinogen C-terminal domain in the interval R141–Y383. A glycan (N-linked (GlcNAc...) asparagine) is linked at N238. Intrachain disulfides connect C310/C314 and C324/C338. N-linked (GlcNAc...) asparagine glycosylation occurs at N329.

As to expression, mainly expressed in adult heart.

It localises to the secreted. The polypeptide is Angiopoietin-related protein 5 (ANGPTL5) (Homo sapiens (Human)).